Consider the following 552-residue polypeptide: Putative transport protein YE4162 (552 aa).

The next 6 helical transmembrane spans lie at 1–21, 26–46, 65–85, 96–116, 119–139, and 158–178; these read MSAI…GLWI, VYGV…VGHF, FGLI…FFSS, FAIL…KLFA, LPII…LGAA, and MGYA…MWLI. 2 consecutive RCK C-terminal domains span residues 192 to 276 and 279 to 361; these read EFDS…VVGE and DVTL…VVGN. Helical transmembrane passes span 371–391, 393–413, 439–459, 464–484, 493–513, and 530–550; these read MLPV…PLFI, GFPA…ALIL, IVLF…NTLV, LAWI…VGIL, YLTL…LAFA, and VYPL…VLFW.

This sequence belongs to the AAE transporter (TC 2.A.81) family. YidE subfamily.

The protein resides in the cell membrane. This is Putative transport protein YE4162 from Yersinia enterocolitica serotype O:8 / biotype 1B (strain NCTC 13174 / 8081).